Here is a 271-residue protein sequence, read N- to C-terminus: NADPH-dependent 7-cyano-7-deazaguanine reductase (271 aa).

81–83 (IES) lines the substrate pocket. Residue 83–84 (SK) participates in NADPH binding. The active-site Thioimide intermediate is the Cys177. Asp184 serves as the catalytic Proton donor. 216-217 (HE) is a binding site for substrate. 245-246 (RG) lines the NADPH pocket.

The protein belongs to the GTP cyclohydrolase I family. QueF type 2 subfamily. As to quaternary structure, homodimer.

Its subcellular location is the cytoplasm. The enzyme catalyses 7-aminomethyl-7-carbaguanine + 2 NADP(+) = 7-cyano-7-deazaguanine + 2 NADPH + 3 H(+). Its pathway is tRNA modification; tRNA-queuosine biosynthesis. Its function is as follows. Catalyzes the NADPH-dependent reduction of 7-cyano-7-deazaguanine (preQ0) to 7-aminomethyl-7-deazaguanine (preQ1). The chain is NADPH-dependent 7-cyano-7-deazaguanine reductase from Xanthomonas oryzae pv. oryzae (strain MAFF 311018).